A 315-amino-acid chain; its full sequence is Ribosomal RNA small subunit methyltransferase H (315 aa).

S-adenosyl-L-methionine-binding positions include 35-37 (AGH), Asp55, Phe84, Asp105, and Gln112.

This sequence belongs to the methyltransferase superfamily. RsmH family.

The protein localises to the cytoplasm. The enzyme catalyses cytidine(1402) in 16S rRNA + S-adenosyl-L-methionine = N(4)-methylcytidine(1402) in 16S rRNA + S-adenosyl-L-homocysteine + H(+). Specifically methylates the N4 position of cytidine in position 1402 (C1402) of 16S rRNA. The sequence is that of Ribosomal RNA small subunit methyltransferase H from Streptococcus agalactiae serotype Ia (strain ATCC 27591 / A909 / CDC SS700).